The following is a 386-amino-acid chain: S-adenosylmethionine synthase (386 aa).

ATP is bound at residue His-14. Asp-16 lines the Mg(2+) pocket. Glu-42 is a binding site for K(+). Positions 55 and 101 each coordinate L-methionine. Residues 101–111 are flexible loop; it reads QSADIALGVDE. ATP is bound by residues 166-168, 233-234, Asp-242, 248-249, Ala-265, and Lys-269; these read DGK, RF, and RK. Asp-242 is a binding site for L-methionine. Lys-273 serves as a coordination point for L-methionine.

It belongs to the AdoMet synthase family. As to quaternary structure, homotetramer; dimer of dimers. Mg(2+) is required as a cofactor. Requires K(+) as cofactor.

It localises to the cytoplasm. It carries out the reaction L-methionine + ATP + H2O = S-adenosyl-L-methionine + phosphate + diphosphate. It functions in the pathway amino-acid biosynthesis; S-adenosyl-L-methionine biosynthesis; S-adenosyl-L-methionine from L-methionine: step 1/1. Catalyzes the formation of S-adenosylmethionine (AdoMet) from methionine and ATP. The overall synthetic reaction is composed of two sequential steps, AdoMet formation and the subsequent tripolyphosphate hydrolysis which occurs prior to release of AdoMet from the enzyme. The polypeptide is S-adenosylmethionine synthase (Acholeplasma laidlawii (strain PG-8A)).